The sequence spans 227 residues: Cytochrome c oxidase subunit 2 (227 aa).

Residues 1–14 (MAYPLQLGFQDASS) lie on the Mitochondrial intermembrane side of the membrane. Residues 15–45 (PIMEELLHFHDHTLMIVFLISSLVLYIISLM) form a helical membrane-spanning segment. At 46-59 (LTTKLTHTSTMDAQ) the chain is on the mitochondrial matrix side. Residues 60–87 (EVETIWTILPAIILILIALPSLRILYMM) form a helical membrane-spanning segment. Over 88–227 (DEINNPSLTV…HFENWTTTML (140 aa)) the chain is Mitochondrial intermembrane. Residues His161, Cys196, Glu198, Cys200, His204, and Met207 each contribute to the Cu cation site. Glu198 is a binding site for Mg(2+).

The protein belongs to the cytochrome c oxidase subunit 2 family. As to quaternary structure, component of the cytochrome c oxidase (complex IV, CIV), a multisubunit enzyme composed of 14 subunits. The complex is composed of a catalytic core of 3 subunits MT-CO1, MT-CO2 and MT-CO3, encoded in the mitochondrial DNA, and 11 supernumerary subunits COX4I, COX5A, COX5B, COX6A, COX6B, COX6C, COX7A, COX7B, COX7C, COX8 and NDUFA4, which are encoded in the nuclear genome. The complex exists as a monomer or a dimer and forms supercomplexes (SCs) in the inner mitochondrial membrane with NADH-ubiquinone oxidoreductase (complex I, CI) and ubiquinol-cytochrome c oxidoreductase (cytochrome b-c1 complex, complex III, CIII), resulting in different assemblies (supercomplex SCI(1)III(2)IV(1) and megacomplex MCI(2)III(2)IV(2)). Found in a complex with TMEM177, COA6, COX18, COX20, SCO1 and SCO2. Interacts with TMEM177 in a COX20-dependent manner. Interacts with COX20. Interacts with COX16. It depends on Cu cation as a cofactor.

The protein resides in the mitochondrion inner membrane. It catalyses the reaction 4 Fe(II)-[cytochrome c] + O2 + 8 H(+)(in) = 4 Fe(III)-[cytochrome c] + 2 H2O + 4 H(+)(out). Component of the cytochrome c oxidase, the last enzyme in the mitochondrial electron transport chain which drives oxidative phosphorylation. The respiratory chain contains 3 multisubunit complexes succinate dehydrogenase (complex II, CII), ubiquinol-cytochrome c oxidoreductase (cytochrome b-c1 complex, complex III, CIII) and cytochrome c oxidase (complex IV, CIV), that cooperate to transfer electrons derived from NADH and succinate to molecular oxygen, creating an electrochemical gradient over the inner membrane that drives transmembrane transport and the ATP synthase. Cytochrome c oxidase is the component of the respiratory chain that catalyzes the reduction of oxygen to water. Electrons originating from reduced cytochrome c in the intermembrane space (IMS) are transferred via the dinuclear copper A center (CU(A)) of subunit 2 and heme A of subunit 1 to the active site in subunit 1, a binuclear center (BNC) formed by heme A3 and copper B (CU(B)). The BNC reduces molecular oxygen to 2 water molecules using 4 electrons from cytochrome c in the IMS and 4 protons from the mitochondrial matrix. This Tupaia glis (Common tree shrew) protein is Cytochrome c oxidase subunit 2 (MT-CO2).